The sequence spans 153 residues: Small ribosomal subunit protein uS7c (153 aa).

The protein belongs to the universal ribosomal protein uS7 family. In terms of assembly, part of the 30S ribosomal subunit.

It is found in the plastid. Functionally, one of the primary rRNA binding proteins, it binds directly to 16S rRNA where it nucleates assembly of the head domain of the 30S subunit. The polypeptide is Small ribosomal subunit protein uS7c (rps7) (Helicosporidium sp. subsp. Simulium jonesii (Green alga)).